A 371-amino-acid chain; its full sequence is MDVSEGGVTVSVPTASGGGEGAADDVFFNATQELNRDLTVATLAAFREREPRAASYLDAMTASGIRGVRAANAGWDVTMADVDADAVELATSNLARNGLDGEVVARDANSLLHDHDRVLDVVDIDPFGSPMPFADAAFANARNLVCVTATDTAPLCGAHFESGVRKYSATPRNTNYHAEMGLRILLGALARTAARYDVGVTPILSHVSDHYVRTYLELDHRATDANAAVEQVGHVYHCQQCLSRDHEYGLVAAPRAECPRCGGHQVLTAGPLWLGPAHEEAFAASVREQLTREMGEASQAFHLLQTIEGELHEPTHYDQHRLYSQWGEPAVGMAEFLDQLRDAGLRASRTHFGGTTFKTDGGLAEVEAAVL.

A Trm1 methyltransferase domain is found at 1–370 (MDVSEGGVTV…GGLAEVEAAV (370 aa)). S-adenosyl-L-methionine is bound by residues arginine 36, arginine 66, aspartate 81, aspartate 107, and alanine 108. The Zn(2+) site is built by cysteine 238, cysteine 241, cysteine 258, and cysteine 261.

Belongs to the class I-like SAM-binding methyltransferase superfamily. Trm1 family.

The enzyme catalyses guanosine(26) in tRNA + 2 S-adenosyl-L-methionine = N(2)-dimethylguanosine(26) in tRNA + 2 S-adenosyl-L-homocysteine + 2 H(+). Its function is as follows. Dimethylates a single guanine residue at position 26 of a number of tRNAs using S-adenosyl-L-methionine as donor of the methyl groups. The protein is tRNA (guanine(26)-N(2))-dimethyltransferase of Halobacterium salinarum (strain ATCC 700922 / JCM 11081 / NRC-1) (Halobacterium halobium).